Reading from the N-terminus, the 387-residue chain is Trichocyst matrix protein T2-C (387 aa).

The N-terminal stretch at 1-19 is a signal peptide; the sequence is MKTIILALALIVLASSTQA. Residues 20–48 constitute a propeptide that is removed on maturation; it reads DVIATIKKIDQSPFGRTLFDTIWLELQTG. The stretch at 51–163 forms a coiled coil; that stretch reads LDRLLQTLTD…KVLEHQEATA (113 aa). Positions 184 to 239 are excised as a propeptide; it reads KGKATKQPAHKFTKEVASMIQKHFTTSAKKAAKFQHRKGYSKLFKAFATIASKVEQ. Residues 294–333 are a coiled coil; it reads TALANAQSDLAALNDVIAQVEASLDTTNQRIENVSADRND.

The protein belongs to the TMP family. In terms of processing, two components are produced by post-translational processing from the precursor peptide.

It localises to the trichocyst. Its function is as follows. Structural protein that crystallize inside the trichocyst matrix. The protein is Trichocyst matrix protein T2-C (T2C) of Paramecium tetraurelia.